The primary structure comprises 1072 residues: Carbamoyl phosphate synthase large chain (1072 aa).

The tract at residues 1 to 401 is carboxyphosphate synthetic domain; it reads MPKRLDINTI…SLLKAVRSLE (401 aa). Positions 129, 169, 175, 176, 208, 210, 215, 241, 242, 243, 284, and 298 each coordinate ATP. In terms of domain architecture, ATP-grasp 1 spans 133-327; that stretch reads RTLMQDLNEP…IAKLAAKIAV (195 aa). The Mg(2+) site is built by glutamine 284, glutamate 298, and asparagine 300. Residues glutamine 284, glutamate 298, and asparagine 300 each coordinate Mn(2+). The interval 402-546 is oligomerization domain; it reads LGIYHLELDH…YSTYADENES (145 aa). Residues 547-929 are carbamoyl phosphate synthetic domain; sequence IVTDRKSVVV…ALYKGLVASG (383 aa). Positions 671 to 861 constitute an ATP-grasp 2 domain; sequence EAALTKLGIP…MANVATKVIL (191 aa). ATP contacts are provided by arginine 707, arginine 746, glutamate 752, glycine 777, valine 778, histidine 779, serine 780, glutamine 820, and glutamate 832. Mg(2+) is bound by residues glutamine 820, glutamate 832, and asparagine 834. Positions 820, 832, and 834 each coordinate Mn(2+). An MGS-like domain is found at 930–1072; the sequence is INIPTHGSVI…QTKRHEVVHA (143 aa). The interval 930 to 1072 is allosteric domain; it reads INIPTHGSVI…QTKRHEVVHA (143 aa).

Belongs to the CarB family. As to quaternary structure, composed of two chains; the small (or glutamine) chain promotes the hydrolysis of glutamine to ammonia, which is used by the large (or ammonia) chain to synthesize carbamoyl phosphate. Tetramer of heterodimers (alpha,beta)4. It depends on Mg(2+) as a cofactor. Requires Mn(2+) as cofactor.

It catalyses the reaction hydrogencarbonate + L-glutamine + 2 ATP + H2O = carbamoyl phosphate + L-glutamate + 2 ADP + phosphate + 2 H(+). The enzyme catalyses hydrogencarbonate + NH4(+) + 2 ATP = carbamoyl phosphate + 2 ADP + phosphate + 2 H(+). The protein operates within amino-acid biosynthesis; L-arginine biosynthesis; carbamoyl phosphate from bicarbonate: step 1/1. It participates in pyrimidine metabolism; UMP biosynthesis via de novo pathway; (S)-dihydroorotate from bicarbonate: step 1/3. In terms of biological role, large subunit of the glutamine-dependent carbamoyl phosphate synthetase (CPSase). CPSase catalyzes the formation of carbamoyl phosphate from the ammonia moiety of glutamine, carbonate, and phosphate donated by ATP, constituting the first step of 2 biosynthetic pathways, one leading to arginine and/or urea and the other to pyrimidine nucleotides. The large subunit (synthetase) binds the substrates ammonia (free or transferred from glutamine from the small subunit), hydrogencarbonate and ATP and carries out an ATP-coupled ligase reaction, activating hydrogencarbonate by forming carboxy phosphate which reacts with ammonia to form carbamoyl phosphate. In Bacillus cereus (strain ATCC 14579 / DSM 31 / CCUG 7414 / JCM 2152 / NBRC 15305 / NCIMB 9373 / NCTC 2599 / NRRL B-3711), this protein is Carbamoyl phosphate synthase large chain.